Reading from the N-terminus, the 362-residue chain is Phosphoserine aminotransferase (362 aa).

R43 lines the L-glutamate pocket. Pyridoxal 5'-phosphate contacts are provided by residues 77-78 (AR), W103, T153, D173, and Q196. Position 197 is an N6-(pyridoxal phosphate)lysine (K197).

This sequence belongs to the class-V pyridoxal-phosphate-dependent aminotransferase family. SerC subfamily. In terms of assembly, homodimer. Pyridoxal 5'-phosphate serves as cofactor.

It localises to the cytoplasm. The catalysed reaction is O-phospho-L-serine + 2-oxoglutarate = 3-phosphooxypyruvate + L-glutamate. It catalyses the reaction 4-(phosphooxy)-L-threonine + 2-oxoglutarate = (R)-3-hydroxy-2-oxo-4-phosphooxybutanoate + L-glutamate. Its pathway is amino-acid biosynthesis; L-serine biosynthesis; L-serine from 3-phospho-D-glycerate: step 2/3. The protein operates within cofactor biosynthesis; pyridoxine 5'-phosphate biosynthesis; pyridoxine 5'-phosphate from D-erythrose 4-phosphate: step 3/5. In terms of biological role, catalyzes the reversible conversion of 3-phosphohydroxypyruvate to phosphoserine and of 3-hydroxy-2-oxo-4-phosphonooxybutanoate to phosphohydroxythreonine. This is Phosphoserine aminotransferase from Legionella pneumophila (strain Paris).